A 169-amino-acid chain; its full sequence is Thermonuclease (169 aa).

The first 26 residues, 1-26 (MKKITTGLIIVVAAIIVLSIQFMTES), serve as a signal peptide directing secretion. Residues Arg65, Glu73, and Arg115 contribute to the active site.

It belongs to the thermonuclease family. The cofactor is Ca(2+).

It is found in the secreted. It catalyses the reaction Endonucleolytic cleavage to nucleoside 3'-phosphates and 3'-phosphooligonucleotide end-products.. Its function is as follows. Enzyme that catalyzes the hydrolysis of both DNA and RNA at the 5'-position of the phosphodiester bond. This is Thermonuclease (nucH) from Staphylococcus hyicus.